Reading from the N-terminus, the 263-residue chain is MGLFHSIFSLPSTINDSIEKQIYMPPYIPRFYYESLNTNYSKIFTRTSSNGDDIPIVQIRPKNNPFPQKYIVFSHGNGCDVYSVFSYLTNLSDKLDVGIITYDYVGYGLSRDNIPTEQGCYDSIEVAVDFLLNDYGLDPKNIYLFGQSLGTGITIDYAHKNNWNSPIILVSPYKSICTVVVDSCIVRPIDKFCTLNKIYQIKCPVKIFHGENDNVINITHGKKIYDSLNDKSLEPVWIPNTGHNDILDKITIQQIREVIDYFD.

Glycine 2 carries the N-myristoyl glycine; by host lipid modification.

The protein belongs to the AB hydrolase superfamily.

This is Putative alpha/beta hydrolase L404 from Acanthamoeba polyphaga (Amoeba).